Consider the following 482-residue polypeptide: uncharacterized protein (482 aa).

Composition is skewed to low complexity over residues Ser24 to Gln86 and Thr312 to Ile339. Disordered regions lie at residues Ser24–Tyr88 and Leu307–Lys376. Residues Glu342–Ser363 are compositionally biased toward acidic residues.

This is an uncharacterized protein from Dictyostelium discoideum (Social amoeba).